The following is a 229-amino-acid chain: 2-C-methyl-D-erythritol 4-phosphate cytidylyltransferase (229 aa).

This sequence belongs to the IspD/TarI cytidylyltransferase family. IspD subfamily.

It carries out the reaction 2-C-methyl-D-erythritol 4-phosphate + CTP + H(+) = 4-CDP-2-C-methyl-D-erythritol + diphosphate. The protein operates within isoprenoid biosynthesis; isopentenyl diphosphate biosynthesis via DXP pathway; isopentenyl diphosphate from 1-deoxy-D-xylulose 5-phosphate: step 2/6. In terms of biological role, catalyzes the formation of 4-diphosphocytidyl-2-C-methyl-D-erythritol from CTP and 2-C-methyl-D-erythritol 4-phosphate (MEP). The protein is 2-C-methyl-D-erythritol 4-phosphate cytidylyltransferase of Neisseria gonorrhoeae (strain NCCP11945).